The primary structure comprises 374 residues: 8-amino-7-oxononanoate synthase (374 aa).

Substrate-binding residues include Arg-22 and Arg-29. A pyridoxal 5'-phosphate-binding site is contributed by 109 to 110; the sequence is GY. Substrate is bound at residue His-134. Pyridoxal 5'-phosphate is bound by residues Ser-182, 207 to 210, and 227 to 230; these read DDAH and TLSK. Lys-230 carries the post-translational modification N6-(pyridoxal phosphate)lysine. Residue Thr-339 participates in substrate binding.

This sequence belongs to the class-II pyridoxal-phosphate-dependent aminotransferase family. BioF subfamily. In terms of assembly, homodimer. Pyridoxal 5'-phosphate is required as a cofactor.

The catalysed reaction is 6-carboxyhexanoyl-[ACP] + L-alanine + H(+) = (8S)-8-amino-7-oxononanoate + holo-[ACP] + CO2. The protein operates within cofactor biosynthesis; biotin biosynthesis. In terms of biological role, catalyzes the decarboxylative condensation of pimeloyl-[acyl-carrier protein] and L-alanine to produce 8-amino-7-oxononanoate (AON), [acyl-carrier protein], and carbon dioxide. In Methylobacterium radiotolerans (strain ATCC 27329 / DSM 1819 / JCM 2831 / NBRC 15690 / NCIMB 10815 / 0-1), this protein is 8-amino-7-oxononanoate synthase.